Reading from the N-terminus, the 829-residue chain is MGCAPSIHISERLVAEDAPSPAAPPLSSGGPRLPQGQKTAALPRTRGAGLLESELRDGSGKKVAVADVQFGPMRFHQDQLQVLLVFTKEDNQCNGFCRACEKAGFKCTVTKEAQAVLACFLDKHHDIIIIDHRNPRQLDAEALCRSIRSSKLSENTVIVGVVRRVDREELSVMPFISAGFTRRYVENPNIMACYNELLQLEFGEVRSQLKLRACNSVFTALENSEDAIEITSEDRFIQYANPAFETTMGYQSGELIGKELGEVPINEKKADLLDTINSCIRIGKEWQGIYYAKKKNGDNIQQNVKIIPVIGQGGKIRHYVSIIRVCNGNNKAEKISECVQSDTHTDNQTGKHKDRRKGSLDVKAVASRATEVSSQRRHSSMARIHSMTIEAPITKVINIINAAQESSPMPVTEALDRVLEILRTTELYSPQFGAKDDDPHANDLVGGLMSDGLRRLSGNEYVLSTKNTQMVSSNIITPISLDDVPPRIARAMENEEYWDFDIFELEAATHNRPLIYLGLKMFARFGICEFLHCSESTLRSWLQIIEANYHSSNPYHNSTHSADVLHATAYFLSKERIKETLDPIDEVAALIAATIHDVDHPGRTNSFLCNAGSELAILYNDTAVLESHHAALAFQLTTGDDKCNIFKNMERNDYRTLRQGIIDMVLATEMTKHFEHVNKFVNSINKPLATLEENGETDKNQEVINTMLRTPENRTLIKRMLIKCADVSNPCRPLQYCIEWAARISEEYFSQTDEEKQQGLPVVMPVFDRNTCSIPKSQISFIDYFITDMFDAWDAFVDLPDLMQHLDNNFKYWKGLDEMKLRNLRPPPE.

The tract at residues 16–46 is disordered; the sequence is EDAPSPAAPPLSSGGPRLPQGQKTAALPRTR. Ser-20 carries the post-translational modification Phosphoserine. The region spanning 213-283 is the PAS domain; sequence ACNSVFTALE…DTINSCIRIG (71 aa). Residues 287-329 form the PAC domain; sequence QGIYYAKKKNGDNIQQNVKIIPVIGQGGKIRHYVSIIRVCNGN. The segment at 341–360 is disordered; that stretch reads SDTHTDNQTGKHKDRRKGSL. Position 359 is a phosphoserine; by PKA (Ser-359). Residues Ser-386 and Ser-457 each carry the phosphoserine modification. Positions 454 to 461 are involved in RAF1-binding; it reads RRLSGNEY. The residue at position 461 (Tyr-461) is a Phosphotyrosine. One can recognise a PDEase domain in the interval 480–820; the sequence is SLDDVPPRIA…KYWKGLDEMK (341 aa). Catalysis depends on His-556, which acts as the Proton donor. Positions 560, 596, 597, and 726 each coordinate a divalent metal cation.

This sequence belongs to the cyclic nucleotide phosphodiesterase family. PDE8 subfamily. Interacts with RAF1. The interaction promotes RAF1 activity. A divalent metal cation serves as cofactor. In terms of processing, phosphorylated at Ser-359 by PKA under elevated cAMP conditions, this enhances catalytic activity. Expressed in most tissues except thymus and peripheral blood leukocytes. Highest levels in testis, ovary, small intestine and colon.

The enzyme catalyses 3',5'-cyclic AMP + H2O = AMP + H(+). It functions in the pathway purine metabolism; 3',5'-cyclic AMP degradation; AMP from 3',5'-cyclic AMP: step 1/1. Inhibited by dipyridimole. Insensitive to selective PDE inhibitors including rolipram and zaprinast as well as to the non-selective inhibitor, IBMX. Unaffected by cGMP. Its function is as follows. Hydrolyzes the second messenger cAMP, which is a key regulator of many important physiological processes. May be involved in maintaining basal levels of the cyclic nucleotide and/or in the cAMP regulation of germ cell development. Binding to RAF1 reduces RAF1 'Ser-259' inhibitory-phosphorylation and stimulates RAF1-dependent EGF-activated ERK-signaling. Protects against cell death induced by hydrogen peroxide and staurosporine. The protein is High affinity cAMP-specific and IBMX-insensitive 3',5'-cyclic phosphodiesterase 8A (PDE8A) of Homo sapiens (Human).